A 308-amino-acid chain; its full sequence is MNTQAKLVNELKNITTEGQNPNTLDIDLLDSLGVLKKINTEDQKVASIVGLLLPEISQGVDLIVDAFACGGRLIYIGAGTSGRLGVLDAVECPPTFSVSSEQVIGILAGGAGAMYKAVEGAEDNRQLAIDDLKAINLSSKDIVVGIAASGRTPYVISGMAFAREQGAKVIGVSCSANSSYAQNCDINICAVVGAEVLTGSTRMKSGTAQKLILNMLSTASMIRSGKSYQNLMIDVNASNKKLYARAVRIVMQATECDFDTAEMALAQANNQTKLASLMVLTGLDSTQAKAALASNKGFLRKAVEQQGC.

One can recognise an SIS domain in the interval 63 to 226; the sequence is IVDAFACGGR…STASMIRSGK (164 aa). Residue Glu91 is the Proton donor of the active site. Residue Glu122 is part of the active site.

Belongs to the GCKR-like family. MurNAc-6-P etherase subfamily. As to quaternary structure, homodimer.

The catalysed reaction is N-acetyl-D-muramate 6-phosphate + H2O = N-acetyl-D-glucosamine 6-phosphate + (R)-lactate. It participates in amino-sugar metabolism; 1,6-anhydro-N-acetylmuramate degradation. Its pathway is amino-sugar metabolism; N-acetylmuramate degradation. The protein operates within cell wall biogenesis; peptidoglycan recycling. Its function is as follows. Specifically catalyzes the cleavage of the D-lactyl ether substituent of MurNAc 6-phosphate, producing GlcNAc 6-phosphate and D-lactate. Together with AnmK, is also required for the utilization of anhydro-N-acetylmuramic acid (anhMurNAc) either imported from the medium or derived from its own cell wall murein, and thus plays a role in cell wall recycling. The protein is N-acetylmuramic acid 6-phosphate etherase of Colwellia psychrerythraea (strain 34H / ATCC BAA-681) (Vibrio psychroerythus).